Reading from the N-terminus, the 120-residue chain is Large ribosomal subunit protein bL17 (120 aa).

The protein belongs to the bacterial ribosomal protein bL17 family. In terms of assembly, part of the 50S ribosomal subunit. Contacts protein L32.

The sequence is that of Large ribosomal subunit protein bL17 from Shouchella clausii (strain KSM-K16) (Alkalihalobacillus clausii).